We begin with the raw amino-acid sequence, 197 residues long: Probable GTP-binding protein EngB (197 aa).

Positions 22-197 constitute an EngB-type G domain; the sequence is TGVEVAFAGR…LKEKLDIWYQ (176 aa). GTP is bound by residues 30–37, 57–61, 75–78, 142–145, and 177–179; these read GRSNAGKS, GRTQL, DLPG, TKAD, and FSS. Serine 37 and threonine 59 together coordinate Mg(2+).

Belongs to the TRAFAC class TrmE-Era-EngA-EngB-Septin-like GTPase superfamily. EngB GTPase family. Mg(2+) is required as a cofactor.

Functionally, necessary for normal cell division and for the maintenance of normal septation. The polypeptide is Probable GTP-binding protein EngB (Francisella philomiragia subsp. philomiragia (strain ATCC 25017 / CCUG 19701 / FSC 153 / O#319-036)).